A 453-amino-acid polypeptide reads, in one-letter code: Ribulose bisphosphate carboxylase large chain (453 aa).

A propeptide spanning residues 1–2 (MS) is cleaved from the precursor. An N-acetylproline modification is found at P3. K14 carries the N6,N6,N6-trimethyllysine modification. Residues N123 and T173 each contribute to the substrate site. Residue K175 is the Proton acceptor of the active site. K177 is a binding site for substrate. Mg(2+) is bound by residues K201, D203, and E204. Position 201 is an N6-carboxylysine (K201). The active-site Proton acceptor is H294. Residues R295, H327, and S379 each coordinate substrate.

Belongs to the RuBisCO large chain family. Type I subfamily. In terms of assembly, heterohexadecamer of 8 large chains and 8 small chains; disulfide-linked. The disulfide link is formed within the large subunit homodimers. It depends on Mg(2+) as a cofactor. Post-translationally, the disulfide bond which can form in the large chain dimeric partners within the hexadecamer appears to be associated with oxidative stress and protein turnover.

It localises to the plastid. The protein localises to the chloroplast. The enzyme catalyses 2 (2R)-3-phosphoglycerate + 2 H(+) = D-ribulose 1,5-bisphosphate + CO2 + H2O. It catalyses the reaction D-ribulose 1,5-bisphosphate + O2 = 2-phosphoglycolate + (2R)-3-phosphoglycerate + 2 H(+). Functionally, ruBisCO catalyzes two reactions: the carboxylation of D-ribulose 1,5-bisphosphate, the primary event in carbon dioxide fixation, as well as the oxidative fragmentation of the pentose substrate in the photorespiration process. Both reactions occur simultaneously and in competition at the same active site. This Galium aparine (Catchweed bedstraw) protein is Ribulose bisphosphate carboxylase large chain.